A 211-amino-acid chain; its full sequence is ATP-dependent Clp protease proteolytic subunit (211 aa).

The active-site Nucleophile is Ser-106. His-131 is an active-site residue.

The protein belongs to the peptidase S14 family. Fourteen ClpP subunits assemble into 2 heptameric rings which stack back to back to give a disk-like structure with a central cavity, resembling the structure of eukaryotic proteasomes.

It localises to the cytoplasm. It carries out the reaction Hydrolysis of proteins to small peptides in the presence of ATP and magnesium. alpha-casein is the usual test substrate. In the absence of ATP, only oligopeptides shorter than five residues are hydrolyzed (such as succinyl-Leu-Tyr-|-NHMec, and Leu-Tyr-Leu-|-Tyr-Trp, in which cleavage of the -Tyr-|-Leu- and -Tyr-|-Trp bonds also occurs).. In terms of biological role, cleaves peptides in various proteins in a process that requires ATP hydrolysis. Has a chymotrypsin-like activity. Plays a major role in the degradation of misfolded proteins. This chain is ATP-dependent Clp protease proteolytic subunit, found in Rhodopseudomonas palustris (strain BisA53).